Consider the following 663-residue polypeptide: Cytoplasmic dynein 1 intermediate chain (663 aa).

Over residues 17–37 (LREEKDRRRREKEIKDMEEAA) the composition is skewed to basic and acidic residues. Disordered stretches follow at residues 17–52 (LREE…DQRK) and 75–107 (SVNS…KKQP). The segment covering 75–85 (SVNSMTSDNSN) has biased composition (low complexity). Polar residues predominate over residues 86–99 (TQTPDASLQATVNG). WD repeat units follow at residues 311–360 (SKNR…STPE), 364–404 (HCQS…RTPI), 413–454 (AHTH…QPQD), 463–503 (SKAI…SGVN), 508–553 (RHLG…PLYS), 556–596 (DNSD…EVPT), and 602–641 (AGAP…AQPS).

The protein belongs to the dynein intermediate chain family. As to quaternary structure, homodimer. The cytoplasmic dynein 1 complex consists of two catalytic heavy chains (HCs) and a number of non-catalytic subunits presented by intermediate chains (ICs), light intermediate chains (LICs) and light chains (LCs). As to expression, high levels of isoform 1b, isoform 1c, isoform 3a and isoform 4 accumulate in early egg chambers and at stage 9 become concentrated at the posterior of the oocyte. Isoform 5a and isoform 5b are highly expressed in adult head and to a lesser extent in adult torso. Isoform 1a, isoform 2a and isoform 2b are found in all tissues examined, including ovaries, midgut, torso and head.

It localises to the cytoplasm. It is found in the cytoskeleton. The protein resides in the lysosome membrane. The protein localises to the nucleus membrane. Its function is as follows. Acts as one of several non-catalytic accessory components of the cytoplasmic dynein 1 complex that are thought to be involved in linking dynein to cargos and to adapter proteins that regulate dynein function. Cytoplasmic dynein 1 acts as a motor for the intracellular retrograde motility of vesicles and organelles along microtubules. The intermediate chains mediate the help dynein bind to dynactin 150 kDa component. This Drosophila melanogaster (Fruit fly) protein is Cytoplasmic dynein 1 intermediate chain (sw).